Reading from the N-terminus, the 137-residue chain is Universal stress protein in QAH/OAS sulfhydrylase 3'region (137 aa).

The protein belongs to the universal stress protein A family.

The sequence is that of Universal stress protein in QAH/OAS sulfhydrylase 3'region from Thermus aquaticus.